A 435-amino-acid polypeptide reads, in one-letter code: Cytochrome c biogenesis protein CcsB (435 aa).

3 helical membrane-spanning segments follow: residues 14–34 (LRLA…GTIL), 72–92 (SVWF…CSWR), and 162–182 (VGPL…AWGA).

The protein belongs to the Ccs1/CcsB family. May interact with CcsA.

It is found in the cellular thylakoid membrane. Required during biogenesis of c-type cytochromes (cytochrome c6 and cytochrome f) at the step of heme attachment. This Synechococcus sp. (strain CC9311) protein is Cytochrome c biogenesis protein CcsB.